We begin with the raw amino-acid sequence, 230 residues long: MLNAKHKIKAVILLSGGLDSTTTLAIAKSKKFECYSLSFDYGQKQESELQSAKNIAKIFITSEHRVVKISLSGISKSALTNDNIDVPKFSQSNKIPITYVPARNTIFLSYALAWSEVLNCQHIFIGVNELDYSGYPDCRKSYIKAFEIMANLATKQGIEGQKLTIHTPLIHLNKAQIIKKGLSLGIDYTLTTTCYQADKNGKACGICDACEYRKLGFKEAKVPDQTRYQT.

14–24 (LSGGLDSTTTL) contributes to the ATP binding site. Zn(2+) is bound by residues Cys194, Cys204, Cys207, and Cys210.

It belongs to the QueC family. The cofactor is Zn(2+).

It carries out the reaction 7-carboxy-7-deazaguanine + NH4(+) + ATP = 7-cyano-7-deazaguanine + ADP + phosphate + H2O + H(+). It participates in purine metabolism; 7-cyano-7-deazaguanine biosynthesis. Catalyzes the ATP-dependent conversion of 7-carboxy-7-deazaguanine (CDG) to 7-cyano-7-deazaguanine (preQ(0)). This Vesicomyosocius okutanii subsp. Calyptogena okutanii (strain HA) protein is 7-cyano-7-deazaguanine synthase.